The primary structure comprises 440 residues: (S)-N-methylcoclaurine 3'-hydroxylase-like protein (440 aa).

Residues 2–21 (EIVTVALIAIVFTTFLYLIV) traverse the membrane as a helical; Signal-anchor for type II membrane protein segment. Cys-430 is a binding site for heme.

Belongs to the cytochrome P450 family. It depends on heme as a cofactor.

The protein resides in the membrane. Functionally, involved in the biosynthesis of benzylisoquinoline alkaloids. Probably involved in papaverine biosynthesis since its transcripts are abundant only in cultivars with substantial papaverine accumulation. May catalyze the 3'-hydroxylation of (S)-coclaurine. The chain is (S)-N-methylcoclaurine 3'-hydroxylase-like protein from Papaver somniferum (Opium poppy).